The primary structure comprises 295 residues: Succinate dehydrogenase [ubiquinone] iron-sulfur subunit, mitochondrial (295 aa).

A 2Fe-2S ferredoxin-type domain is found at 67-144; sequence EKPRLQSYTL…DTKIYPLPHM (78 aa). 4 residues coordinate [2Fe-2S] cluster: cysteine 106, cysteine 111, cysteine 114, and cysteine 126. Residues 185–215 form the 4Fe-4S ferredoxin-type domain; sequence ERRRLDGLYECILCACCSTSCPSYWWNQDEY. 3 residues coordinate [4Fe-4S] cluster: cysteine 195, cysteine 198, and cysteine 201. Cysteine 205 serves as a coordination point for [3Fe-4S] cluster. Tryptophan 210 is a binding site for a ubiquinone. [3Fe-4S] cluster-binding residues include cysteine 252 and cysteine 258. Cysteine 262 lines the [4Fe-4S] cluster pocket.

It belongs to the succinate dehydrogenase/fumarate reductase iron-sulfur protein family. Component of complex II composed of four subunits: a flavoprotein (FP), an iron-sulfur protein (IP), and a cytochrome b composed of a large and a small subunit. Requires [2Fe-2S] cluster as cofactor. [3Fe-4S] cluster serves as cofactor. The cofactor is [4Fe-4S] cluster.

Its subcellular location is the mitochondrion inner membrane. The catalysed reaction is a quinone + succinate = fumarate + a quinol. Its pathway is carbohydrate metabolism; tricarboxylic acid cycle; fumarate from succinate (eukaryal route): step 1/1. Iron-sulfur protein (IP) subunit of succinate dehydrogenase (SDH) that is involved in complex II of the mitochondrial electron transport chain and is responsible for transferring electrons from succinate to ubiquinone (coenzyme Q). The sequence is that of Succinate dehydrogenase [ubiquinone] iron-sulfur subunit, mitochondrial (SDH2) from Mycosarcoma maydis (Corn smut fungus).